We begin with the raw amino-acid sequence, 265 residues long: Indole-3-glycerol phosphate synthase (265 aa).

It belongs to the TrpC family.

The catalysed reaction is 1-(2-carboxyphenylamino)-1-deoxy-D-ribulose 5-phosphate + H(+) = (1S,2R)-1-C-(indol-3-yl)glycerol 3-phosphate + CO2 + H2O. Its pathway is amino-acid biosynthesis; L-tryptophan biosynthesis; L-tryptophan from chorismate: step 4/5. This chain is Indole-3-glycerol phosphate synthase, found in Xanthomonas axonopodis pv. citri (strain 306).